Here is a 351-residue protein sequence, read N- to C-terminus: Ion-translocating oxidoreductase complex subunit D (351 aa).

The next 4 helical transmembrane spans lie at 18–38 (IMLL…YFFG), 40–60 (GSLI…GAVL), 87–107 (LPPL…IVIA), and 121–141 (PAMV…TSWL). Threonine 185 carries the post-translational modification FMN phosphoryl threonine. A run of 5 helical transmembrane segments spans residues 211-231 (VLAG…GLLL), 241-261 (IPVS…MIAP), 264-284 (FASP…FFIA), 298-318 (LIFG…GGYP), and 320-340 (GVAF…HYTQ).

It belongs to the NqrB/RnfD family. The complex is composed of six subunits: RnfA, RnfB, RnfC, RnfD, RnfE and RnfG. FMN is required as a cofactor.

It localises to the cell inner membrane. Its function is as follows. Part of a membrane-bound complex that couples electron transfer with translocation of ions across the membrane. The protein is Ion-translocating oxidoreductase complex subunit D of Yersinia pseudotuberculosis serotype I (strain IP32953).